Consider the following 61-residue polypeptide: Small ribosomal subunit protein uS14 (61 aa).

Positions 24, 27, 40, and 43 each coordinate Zn(2+).

Belongs to the universal ribosomal protein uS14 family. Zinc-binding uS14 subfamily. In terms of assembly, part of the 30S ribosomal subunit. Contacts proteins S3 and S10. Requires Zn(2+) as cofactor.

Its function is as follows. Binds 16S rRNA, required for the assembly of 30S particles and may also be responsible for determining the conformation of the 16S rRNA at the A site. The polypeptide is Small ribosomal subunit protein uS14 (Syntrophus aciditrophicus (strain SB)).